The sequence spans 1057 residues: Outer capsid protein VP2 (1057 aa).

The protein belongs to the orbivirus VP2 family.

Its subcellular location is the virion. Functionally, the VP2 protein is one of the two proteins (with VP5) which constitute the virus particle outer capsid. It is the major target of the host immunogenic response. The sequence is that of Outer capsid protein VP2 (Segment-2) from Anas (ducks).